A 328-amino-acid chain; its full sequence is Tetraacyldisaccharide 4'-kinase (328 aa).

55-62 (TAGGNGKT) lines the ATP pocket.

The protein belongs to the LpxK family.

It catalyses the reaction a lipid A disaccharide + ATP = a lipid IVA + ADP + H(+). The protein operates within glycolipid biosynthesis; lipid IV(A) biosynthesis; lipid IV(A) from (3R)-3-hydroxytetradecanoyl-[acyl-carrier-protein] and UDP-N-acetyl-alpha-D-glucosamine: step 6/6. In terms of biological role, transfers the gamma-phosphate of ATP to the 4'-position of a tetraacyldisaccharide 1-phosphate intermediate (termed DS-1-P) to form tetraacyldisaccharide 1,4'-bis-phosphate (lipid IVA). This Shigella flexneri serotype 5b (strain 8401) protein is Tetraacyldisaccharide 4'-kinase.